Consider the following 23-residue polypeptide: Melittin-related peptide AK-23-1 (23 aa).

At lysine 23 the chain carries Lysine amide.

In terms of tissue distribution, expressed by the skin glands.

Its subcellular location is the secreted. This chain is Melittin-related peptide AK-23-1, found in Rana arvalis (Moor frog).